Consider the following 517-residue polypeptide: Histone H4 transcription factor (517 aa).

3 consecutive C2H2-type zinc fingers follow at residues leucine 15–histidine 39, phenylalanine 129–histidine 153, and valine 169–histidine 193. The C2H2-type 4; degenerate zinc-finger motif lies at valine 199–glutamine 221. 5 C2H2-type zinc fingers span residues phenylalanine 229–histidine 251, tyrosine 255–histidine 278, phenylalanine 284–histidine 306, tyrosine 312–histidine 337, and tyrosine 345–histidine 368. Residues proline 373–valine 517 form an interaction with NPAT region. A required for activation of histone H4 transcription and contributes to DNA-binding region spans residues serine 374–arginine 407. The segment at threonine 431–proline 460 is disordered. Residues threonine 451–proline 460 show a composition bias toward polar residues.

In terms of assembly, binds MBD2 and a histone deacetylase complex. Interacts with NPAT. Ubiquitinated. Ubiquitination may lead to proteasome-mediated degradation. In terms of tissue distribution, ubiquitous. Highly expressed in brain, heart, skeletal muscle, spleen, kidney, small intestine, placenta and liver.

The protein resides in the nucleus. Its function is as follows. Transcriptional repressor that binds to the consensus sequence 5'-CGGACGTT-3' and to the RB1 promoter. Transcriptional activator that promotes histone H4 gene transcription at the G1/S phase transition in conjunction with NPAT. Also activates transcription of the ATM and PRKDC genes. Autoregulates its expression by associating with its own promoter. This is Histone H4 transcription factor (HINFP) from Homo sapiens (Human).